We begin with the raw amino-acid sequence, 137 residues long: Large ribosomal subunit protein uL16 (137 aa).

It belongs to the universal ribosomal protein uL16 family. As to quaternary structure, part of the 50S ribosomal subunit.

Binds 23S rRNA and is also seen to make contacts with the A and possibly P site tRNAs. This Cereibacter sphaeroides (strain ATCC 17029 / ATH 2.4.9) (Rhodobacter sphaeroides) protein is Large ribosomal subunit protein uL16.